The following is a 192-amino-acid chain: uncharacterized protein (192 aa).

The Nudix hydrolase domain occupies 29 to 160 (RRQAAVLIPV…PLDIYRRGDS (132 aa)). Positions 67 to 89 (GAVDSSDASLIAAALREAQEEVA) match the Nudix box motif. Positions 83 and 87 each coordinate Mg(2+).

The protein belongs to the Nudix hydrolase family. PCD1 subfamily. It depends on Mn(2+) as a cofactor. Mg(2+) is required as a cofactor.

Functionally, probably mediates the hydrolysis of some nucleoside diphosphate derivatives. This is an uncharacterized protein from Citrobacter koseri (strain ATCC BAA-895 / CDC 4225-83 / SGSC4696).